Reading from the N-terminus, the 153-residue chain is 6,7-dimethyl-8-ribityllumazine synthase 1 (153 aa).

5-amino-6-(D-ribitylamino)uracil is bound by residues phenylalanine 16, 50–52 (AYE), and 74–76 (CVI). 79 to 80 (ET) contributes to the (2S)-2-hydroxy-3-oxobutyl phosphate binding site. The active-site Proton donor is histidine 82. Residue phenylalanine 107 coordinates 5-amino-6-(D-ribitylamino)uracil. A (2S)-2-hydroxy-3-oxobutyl phosphate-binding site is contributed by arginine 121.

The protein belongs to the DMRL synthase family.

It catalyses the reaction (2S)-2-hydroxy-3-oxobutyl phosphate + 5-amino-6-(D-ribitylamino)uracil = 6,7-dimethyl-8-(1-D-ribityl)lumazine + phosphate + 2 H2O + H(+). The protein operates within cofactor biosynthesis; riboflavin biosynthesis; riboflavin from 2-hydroxy-3-oxobutyl phosphate and 5-amino-6-(D-ribitylamino)uracil: step 1/2. In terms of biological role, catalyzes the formation of 6,7-dimethyl-8-ribityllumazine by condensation of 5-amino-6-(D-ribitylamino)uracil with 3,4-dihydroxy-2-butanone 4-phosphate. This is the penultimate step in the biosynthesis of riboflavin. The sequence is that of 6,7-dimethyl-8-ribityllumazine synthase 1 from Caulobacter vibrioides (strain ATCC 19089 / CIP 103742 / CB 15) (Caulobacter crescentus).